A 333-amino-acid polypeptide reads, in one-letter code: Beta-ketoacyl-[acyl-carrier-protein] synthase III (333 aa).

Catalysis depends on residues cysteine 116 and histidine 258. The interval 259 to 263 (QANQR) is ACP-binding. The active site involves asparagine 288.

It belongs to the thiolase-like superfamily. FabH family. Homodimer.

The protein resides in the cytoplasm. The catalysed reaction is malonyl-[ACP] + acetyl-CoA + H(+) = 3-oxobutanoyl-[ACP] + CO2 + CoA. It participates in lipid metabolism; fatty acid biosynthesis. In terms of biological role, catalyzes the condensation reaction of fatty acid synthesis by the addition to an acyl acceptor of two carbons from malonyl-ACP. Catalyzes the first condensation reaction which initiates fatty acid synthesis and may therefore play a role in governing the total rate of fatty acid production. Possesses both acetoacetyl-ACP synthase and acetyl transacylase activities. Its substrate specificity determines the biosynthesis of branched-chain and/or straight-chain of fatty acids. The chain is Beta-ketoacyl-[acyl-carrier-protein] synthase III from Microcystis aeruginosa (strain NIES-843 / IAM M-2473).